We begin with the raw amino-acid sequence, 343 residues long: Dipeptide transport system permease protein DppC (343 aa).

Transmembrane regions (helical) follow at residues 44 to 64, 144 to 164, 195 to 215, 259 to 279, and 309 to 329; these read LVAM…AFVV, LIIA…YGII, LALL…LFAW, GVIV…EAVL, and FQLI…IFFG. An ABC transmembrane type-1 domain is found at 140-329; that stretch reads LRISLIIALA…VLSLTFIFFG (190 aa).

Belongs to the binding-protein-dependent transport system permease family. OppBC subfamily. The complex is composed of two ATP-binding proteins (DppD and DppF), two transmembrane proteins (DppB and DppC) and a solute-binding protein (DppA).

It localises to the cell membrane. Its function is as follows. Part of the ABC transporter DppABCDF involved in dipeptide transport. Responsible for the translocation of the substrate across the membrane. This chain is Dipeptide transport system permease protein DppC, found in Lactococcus lactis subsp. cremoris (strain MG1363).